Reading from the N-terminus, the 336-residue chain is uncharacterized protein (336 aa).

Residue 29–36 (GPKSSGKS) participates in ATP binding.

This sequence belongs to the archaeal ATPase family.

This is an uncharacterized protein from Methanocaldococcus jannaschii (strain ATCC 43067 / DSM 2661 / JAL-1 / JCM 10045 / NBRC 100440) (Methanococcus jannaschii).